Here is a 633-residue protein sequence, read N- to C-terminus: 1-deoxy-D-xylulose-5-phosphate synthase (633 aa).

Thiamine diphosphate-binding positions include His-72 and 113–115 (GHS). Asp-144 is a binding site for Mg(2+). Thiamine diphosphate-binding positions include 145-146 (GA), Asn-173, Tyr-284, and Glu-367. Mg(2+) is bound at residue Asn-173.

It belongs to the transketolase family. DXPS subfamily. Homodimer. Requires Mg(2+) as cofactor. The cofactor is thiamine diphosphate.

It carries out the reaction D-glyceraldehyde 3-phosphate + pyruvate + H(+) = 1-deoxy-D-xylulose 5-phosphate + CO2. Its pathway is metabolic intermediate biosynthesis; 1-deoxy-D-xylulose 5-phosphate biosynthesis; 1-deoxy-D-xylulose 5-phosphate from D-glyceraldehyde 3-phosphate and pyruvate: step 1/1. Functionally, catalyzes the acyloin condensation reaction between C atoms 2 and 3 of pyruvate and glyceraldehyde 3-phosphate to yield 1-deoxy-D-xylulose-5-phosphate (DXP). The chain is 1-deoxy-D-xylulose-5-phosphate synthase from Bacillus licheniformis (strain ATCC 14580 / DSM 13 / JCM 2505 / CCUG 7422 / NBRC 12200 / NCIMB 9375 / NCTC 10341 / NRRL NRS-1264 / Gibson 46).